Reading from the N-terminus, the 543-residue chain is Zinc metalloproteinase (543 aa).

Positions 1-24 (MHPNYYLSPLAVAIALGIASPVKA) are cleaved as a signal peptide. Positions 25-207 (ADPIPLQKSS…PFVQWDDVKT (183 aa)) are excised as a propeptide. Zn(2+) is bound at residue His377. The active site involves Glu378. Zn(2+) contacts are provided by His381 and Glu401. The active-site Proton donor is His463.

Belongs to the peptidase M4 family. Zn(2+) serves as cofactor.

It localises to the secreted. In terms of biological role, cleaves collagen, gelatin, casein, alpha-1-antitrypsin, and bovine insulin. May play a role in the pathogenesis of legionnaires disease. The sequence is that of Zinc metalloproteinase from Legionella pneumophila.